A 94-amino-acid polypeptide reads, in one-letter code: Small ribosomal subunit protein bS6 (94 aa).

Belongs to the bacterial ribosomal protein bS6 family.

Its function is as follows. Binds together with bS18 to 16S ribosomal RNA. The sequence is that of Small ribosomal subunit protein bS6 from Akkermansia muciniphila (strain ATCC BAA-835 / DSM 22959 / JCM 33894 / BCRC 81048 / CCUG 64013 / CIP 107961 / Muc).